The following is a 310-amino-acid chain: Endo-1,4-beta-xylanase B (310 aa).

An N-terminal signal peptide occupies residues 1 to 19 (MISLSSVAIALTTVVGALA). Residues 33-223 (AITSSQTGTN…SSGSASMTVS (191 aa)) form the GH11 domain. Residue Glu119 is the Nucleophile of the active site. The active-site Proton donor is Glu210. The segment covering 218–227 (ASMTVSAGSS) has biased composition (low complexity). Positions 218–274 (ASMTVSAGSSSSGGSGSGSGSGSGSGSGSGSQTTTAGSSTGTGTGSGSGSGSGGSGG) are disordered. Over residues 228–246 (SSGGSGSGSGSGSGSGSGS) the composition is skewed to gly residues. Over residues 247–256 (GSQTTTAGSS) the composition is skewed to low complexity. Residues 257–274 (TGTGTGSGSGSGSGGSGG) are compositionally biased toward gly residues. Residues 275-310 (NCAAQWGQCGGQGWNGPTCCSSGTCKASNQWYSQCL) enclose the CBM1 domain.

The protein belongs to the glycosyl hydrolase 11 (cellulase G) family.

The protein localises to the secreted. It carries out the reaction Endohydrolysis of (1-&gt;4)-beta-D-xylosidic linkages in xylans.. Its pathway is glycan degradation; xylan degradation. Its function is as follows. Endo-1,4-beta-xylanase involved in the hydrolysis of xylan, a major structural heterogeneous polysaccharide found in plant biomass representing the second most abundant polysaccharide in the biosphere, after cellulose. Hydrolyzes birchwood xylan, beechwood xylan, and oat spelt xylan to produce short-chain xylooligosaccharides, xylopentaose, xylotriose, and xylobiose as the main products. The chain is Endo-1,4-beta-xylanase B (xynB) from Penicillium oxalicum.